The primary structure comprises 1034 residues: Presequence protease, mitochondrial (1034 aa).

The transit peptide at 1–29 (MLKGGMLSRWKMWSPQYKILRNHLINFKS) directs the protein to the mitochondrion. H128 contributes to the Zn(2+) binding site. The active-site Proton acceptor is the E131. Positions 132 and 229 each coordinate Zn(2+).

The protein belongs to the peptidase M16 family. PreP subfamily. Homodimer. Requires Zn(2+) as cofactor.

The protein localises to the mitochondrion. Its function is as follows. ATP-independent protease that degrades mitochondrial transit peptides after their cleavage. Also degrades other unstructured peptides. The protein is Presequence protease, mitochondrial of Drosophila melanogaster (Fruit fly).